The primary structure comprises 706 residues: Glutamine-dependent NAD(+) synthetase (706 aa).

The 271-residue stretch at 5-275 (VTVATCALNQ…VEVLTATLDL (271 aa)) folds into the CN hydrolase domain. Glu45 acts as the Proton acceptor; for glutaminase activity in catalysis. Lys114 functions as the For glutaminase activity in the catalytic mechanism. The Nucleophile; for glutaminase activity role is filled by Cys175. Positions 325–706 (YHSPAEEISL…RQRQELDGVD (382 aa)) are ligase. 355-362 (PLSGGVDS) lines the ATP pocket. Residue Ser357 is part of the active site.

The protein in the C-terminal section; belongs to the NAD synthetase family. As to quaternary structure, homohexamer.

It catalyses the reaction deamido-NAD(+) + L-glutamine + ATP + H2O = L-glutamate + AMP + diphosphate + NAD(+) + H(+). The protein operates within cofactor biosynthesis; NAD(+) biosynthesis; NAD(+) from deamido-NAD(+) (L-Gln route): step 1/1. In terms of biological role, catalyzes the ATP-dependent amidation of deamido-NAD to form NAD. Uses L-glutamine as a nitrogen source. The protein is Glutamine-dependent NAD(+) synthetase (NADSYN1) of Bos taurus (Bovine).